Reading from the N-terminus, the 510-residue chain is NAD(P)H-quinone oxidoreductase subunit 2, chloroplastic (510 aa).

13 helical membrane-spanning segments follow: residues leucine 24–leucine 44, tryptophan 59–tryptophan 79, isoleucine 99–isoleucine 119, methionine 124–cysteine 144, leucine 149–tyrosine 169, tyrosine 183–glycine 203, isoleucine 229–phenylalanine 249, tryptophan 295–isoleucine 315, methionine 323–aspartate 343, tyrosine 354–leucine 374, alanine 395–phenylalanine 415, leucine 418–leucine 438, and methionine 484–isoleucine 504.

This sequence belongs to the complex I subunit 2 family. As to quaternary structure, NDH is composed of at least 16 different subunits, 5 of which are encoded in the nucleus.

The protein resides in the plastid. It is found in the chloroplast thylakoid membrane. The enzyme catalyses a plastoquinone + NADH + (n+1) H(+)(in) = a plastoquinol + NAD(+) + n H(+)(out). The catalysed reaction is a plastoquinone + NADPH + (n+1) H(+)(in) = a plastoquinol + NADP(+) + n H(+)(out). NDH shuttles electrons from NAD(P)H:plastoquinone, via FMN and iron-sulfur (Fe-S) centers, to quinones in the photosynthetic chain and possibly in a chloroplast respiratory chain. The immediate electron acceptor for the enzyme in this species is believed to be plastoquinone. Couples the redox reaction to proton translocation, and thus conserves the redox energy in a proton gradient. The chain is NAD(P)H-quinone oxidoreductase subunit 2, chloroplastic from Sisyrinchium montanum (Strict blue-eyed grass).